Here is a 156-residue protein sequence, read N- to C-terminus: Transcription elongation factor GreA (156 aa).

Residues isoleucine 6 to glutamate 75 adopt a coiled-coil conformation.

Belongs to the GreA/GreB family.

In terms of biological role, necessary for efficient RNA polymerase transcription elongation past template-encoded arresting sites. The arresting sites in DNA have the property of trapping a certain fraction of elongating RNA polymerases that pass through, resulting in locked ternary complexes. Cleavage of the nascent transcript by cleavage factors such as GreA or GreB allows the resumption of elongation from the new 3'terminus. GreA releases sequences of 2 to 3 nucleotides. The protein is Transcription elongation factor GreA of Thermosipho africanus (strain TCF52B).